The chain runs to 215 residues: tRNA (guanine-N(7)-)-methyltransferase (215 aa).

S-adenosyl-L-methionine is bound by residues Glu-43, Glu-68, Asp-95, and Asp-117. The active site involves Asp-117. Substrate contacts are provided by residues Lys-121, Asp-153, and 190-193 (TEYE).

The protein belongs to the class I-like SAM-binding methyltransferase superfamily. TrmB family.

The enzyme catalyses guanosine(46) in tRNA + S-adenosyl-L-methionine = N(7)-methylguanosine(46) in tRNA + S-adenosyl-L-homocysteine. The protein operates within tRNA modification; N(7)-methylguanine-tRNA biosynthesis. Its function is as follows. Catalyzes the formation of N(7)-methylguanine at position 46 (m7G46) in tRNA. This chain is tRNA (guanine-N(7)-)-methyltransferase, found in Staphylococcus epidermidis (strain ATCC 35984 / DSM 28319 / BCRC 17069 / CCUG 31568 / BM 3577 / RP62A).